Consider the following 483-residue polypeptide: Glycogen synthase (483 aa).

Lys-15 provides a ligand contact to ADP-alpha-D-glucose.

The protein belongs to the glycosyltransferase 1 family. Bacterial/plant glycogen synthase subfamily.

The enzyme catalyses [(1-&gt;4)-alpha-D-glucosyl](n) + ADP-alpha-D-glucose = [(1-&gt;4)-alpha-D-glucosyl](n+1) + ADP + H(+). It participates in glycan biosynthesis; glycogen biosynthesis. Synthesizes alpha-1,4-glucan chains using ADP-glucose. The sequence is that of Glycogen synthase from Petrotoga mobilis (strain DSM 10674 / SJ95).